The primary structure comprises 493 residues: Ecdysteroid UDP-glucosyltransferase (493 aa).

Positions 1-17 are cleaved as a signal peptide; sequence MIFILLTTLLAVGGAQT.

The protein belongs to the UDP-glycosyltransferase family.

Catalyzes the transfer of glucose from UDP-glucose to ecdysteroids which are insect molting hormones. Expression of egt interferes with normal insect development and block molting. In Choristoneura fumiferana defective polyhedrosis virus (Cfdef), this protein is Ecdysteroid UDP-glucosyltransferase (egt).